We begin with the raw amino-acid sequence, 63 residues long: Large ribosomal subunit protein uL29 (63 aa).

The protein belongs to the universal ribosomal protein uL29 family.

The sequence is that of Large ribosomal subunit protein uL29 from Vibrio vulnificus (strain CMCP6).